The sequence spans 260 residues: Indole-3-glycerol phosphate synthase (260 aa).

The protein belongs to the TrpC family.

The catalysed reaction is 1-(2-carboxyphenylamino)-1-deoxy-D-ribulose 5-phosphate + H(+) = (1S,2R)-1-C-(indol-3-yl)glycerol 3-phosphate + CO2 + H2O. Its pathway is amino-acid biosynthesis; L-tryptophan biosynthesis; L-tryptophan from chorismate: step 4/5. The polypeptide is Indole-3-glycerol phosphate synthase (Lacticaseibacillus paracasei (strain ATCC 334 / BCRC 17002 / CCUG 31169 / CIP 107868 / KCTC 3260 / NRRL B-441) (Lactobacillus paracasei)).